Consider the following 89-residue polypeptide: MKFVFASFALFVIFLCFSQSLSQSYFRCRDNEVFDNCISNCGPPRCSNILNTYPCTNLGPLCTPGCKCKDGRVYDNQGRCVLQTECFQK.

The N-terminal stretch at 1-22 is a signal peptide; that stretch reads MKFVFASFALFVIFLCFSQSLS. 5 disulfide bridges follow: cysteine 28–cysteine 66, cysteine 37–cysteine 62, cysteine 41–cysteine 55, cysteine 46–cysteine 86, and cysteine 68–cysteine 80. The 59-residue stretch at 28-86 folds into the TIL domain; that stretch reads CRDNEVFDNCISNCGPPRCSNILNTYPCTNLGPLCTPGCKCKDGRVYDNQGRCVLQTEC.

The protein belongs to the serine protease inhibitor-like (TIL domain-containing) family. Expressed by the venom gland.

It is found in the secreted. Its function is as follows. Serine protease inhibitor. In Olivierus martensii (Manchurian scorpion), this protein is Venom peptide BmKAPI.